The following is a 117-amino-acid chain: Glycoprotein hormones alpha chain (117 aa).

A signal peptide spans 1 to 23; that stretch reads MGSVKSAGLSLLLLSFLLYVADS. 5 cysteine pairs are disulfide-bonded: Cys-34–Cys-57, Cys-37–Cys-86, Cys-54–Cys-107, Cys-58–Cys-109, and Cys-85–Cys-112. Residues Asn-78 and Asn-103 are each glycosylated (N-linked (GlcNAc...) asparagine).

This sequence belongs to the glycoprotein hormones subunit alpha family. Heterodimer. Glycoprotein hormones are heterodimers composed of a common alpha chain described here and a unique beta chain which confers their biological specificity to the different hormones.

It is found in the secreted. Its function is as follows. Shared alpha chain of heterodimeric glycoprotein hormones. These hormones bind specific receptors on target cells that in turn activate downstream signaling pathways. Involved in gametogenesis and steroidogenesis. This is Glycoprotein hormones alpha chain (cga) from Acanthopagrus latus (Yellowfin seabream).